The sequence spans 40 residues: Photosystem II reaction center protein Y (40 aa).

The helical transmembrane segment at 5 to 23 threads the bilayer; it reads LIVVLAPILLAGGWAVFNI.

It belongs to the PsbY family. In terms of assembly, PSII is composed of 1 copy each of membrane proteins PsbA, PsbB, PsbC, PsbD, PsbE, PsbF, PsbH, PsbI, PsbJ, PsbK, PsbL, PsbM, PsbT, PsbX, PsbY, PsbZ, Psb30/Ycf12, peripheral proteins PsbO, CyanoQ (PsbQ), PsbU, PsbV and a large number of cofactors. It forms dimeric complexes.

The protein localises to the cellular thylakoid membrane. Functionally, loosely associated component of the core of photosystem II (PSII), it is not always seen in crystals. PSII is a light-driven water plastoquinone oxidoreductase, using light energy to abstract electrons from H(2)O, generating a proton gradient subsequently used for ATP formation. The polypeptide is Photosystem II reaction center protein Y (Synechococcus elongatus (strain ATCC 33912 / PCC 7942 / FACHB-805) (Anacystis nidulans R2)).